A 215-amino-acid chain; its full sequence is Adenylate kinase (215 aa).

G10–T15 contacts ATP. Positions S30–V59 are NMP. AMP-binding positions include T31, R36, K57 to V59, G85 to R88, and Q92. The tract at residues G122 to D159 is LID. ATP-binding positions include R123 and I132–Y133. AMP contacts are provided by R156 and R167. Residue L200 coordinates ATP.

Belongs to the adenylate kinase family. As to quaternary structure, monomer.

The protein resides in the cytoplasm. The enzyme catalyses AMP + ATP = 2 ADP. The protein operates within purine metabolism; AMP biosynthesis via salvage pathway; AMP from ADP: step 1/1. Its function is as follows. Catalyzes the reversible transfer of the terminal phosphate group between ATP and AMP. Plays an important role in cellular energy homeostasis and in adenine nucleotide metabolism. This Buchnera aphidicola subsp. Acyrthosiphon pisum (strain 5A) protein is Adenylate kinase.